The sequence spans 175 residues: MEAWECLEDFSAVRNLLEQSSNSTSWFWRFLWGSSQAKLVCRIKEDYKWEFEELLKSCGELFDSLNLGHQALFQEKVIKTLDFSTPGRAAAAVAFLSFIKDKWSEETHLSGGYLLDFLAMHLWRAVVRHKNRLLLLSSVRPAIIPTEEQQQEEARRRRRQEQSPWNPRAGLDPRE.

The tract at residues 147 to 175 (EEQQQEEARRRRRQEQSPWNPRAGLDPRE) is disordered.

It belongs to the adenoviridae E1B 19 kDa protein family.

Its subcellular location is the host cell membrane. It localises to the host nucleus envelope. The protein resides in the host nucleus lamina. In terms of biological role, putative adenovirus Bcl-2 homolog that inhibits apoptosis induced by TNF or FAS pathways, as well as p53-mediated apoptosis. Without E1B 19K function, virus production is compromised because of premature death of host cell. Interacts with Bax protein in cell lysates. The sequence is that of E1B protein, small T-antigen (E1B) from Homo sapiens (Human).